Here is a 112-residue protein sequence, read N- to C-terminus: MSGKIKVTFIINDGEEKTVEAPIGLSILEIAHSNDLDLEGACEGSLACATCHVILEEEFYNKLKKPTEAEEDMLDLAFGLTDTSRLGCQIILTEELDGIKVRIPATTRNIKL.

In terms of domain architecture, 2Fe-2S ferredoxin-type spans 5–107 (IKVTFIINDG…GIKVRIPATT (103 aa)). Residues Cys42, Cys48, Cys51, and Cys88 each contribute to the [2Fe-2S] cluster site.

This sequence belongs to the adrenodoxin/putidaredoxin family. [2Fe-2S] cluster serves as cofactor.

In terms of biological role, ferredoxin are iron-sulfur proteins that transfer electrons in a wide variety of metabolic reactions. The chain is 2Fe-2S ferredoxin (fdxB) from Rickettsia conorii (strain ATCC VR-613 / Malish 7).